The primary structure comprises 352 residues: Speedy protein E16 (352 aa).

Residues 1–90 form a disordered region; that stretch reads MDRTETRFRK…EPEKELAPEP (90 aa). The span at 18–40 shows a compositional bias: polar residues; the sequence is ITTSRQPHPQNEQSPQRSTSGYS. Acidic residues predominate over residues 76-90; sequence DESEEEPEKELAPEP.

Belongs to the Speedy/Ringo family.

The sequence is that of Speedy protein E16 from Homo sapiens (Human).